The primary structure comprises 430 residues: MGKISKAVRGVADIYNGASLIVRIIVGLIIGTVLALTMPHVTWIGEFGTLFVAALKAAAPILVFVLVASALAQGTSKLDRRFGTVLFLYLFTTFLAAVVAVLTSRLFPQTLSLGKAAKADVVPQGLSEVIQTLLTNIVANPIQAIIDGNYICILMWACLFGLAMKSIANESSKAFMANVADAVSQVIRWVINLAPFGIMGLVFTNVADNGLSAFTKYGSLLLLLVGTMLLMVLVFGPLVIFIFLRRNPYPLVYRCFKESGLTAFFTRSSAANIPVNMQLCEKLGLDKDMYSVSIPLGATINMNGAAITITIMAMAAANTLGIQISLPAAILLSVVSALGACGASGVAGGSLLLIPMACSLFGISNDIAMQVVGVGFIIGVIQDSVETCLNSASDVEFAATAEYHAWLKQGRQLPAFMYSKKERAKLGIEA.

9 consecutive transmembrane segments (helical) span residues 24-44 (IIVG…VTWI), 47-67 (FGTL…FVLV), 82-102 (FGTV…VAVL), 144-164 (AIID…GLAM), 186-206 (VIRW…FTNV), 223-243 (LLVG…IFIF), 294-314 (IPLG…IMAM), 320-340 (LGIQ…ALGA), and 361-381 (FGIS…IGVI).

Belongs to the dicarboxylate/amino acid:cation symporter (DAACS) (TC 2.A.23) family.

The protein resides in the cell membrane. The catalysed reaction is L-serine(in) + Na(+)(in) = L-serine(out) + Na(+)(out). It catalyses the reaction L-threonine(in) + Na(+)(in) = L-threonine(out) + Na(+)(out). Functionally, involved in the import of serine and threonine into the cell, with the concomitant import of sodium (symport system). The polypeptide is Serine/threonine transporter SstT (Bifidobacterium adolescentis (strain ATCC 15703 / DSM 20083 / NCTC 11814 / E194a)).